The following is a 107-amino-acid chain: BolA-like protein 3 (107 aa).

Belongs to the BolA/IbaG family. Interacts with NFU1. In terms of tissue distribution, widely expressed.

Its subcellular location is the mitochondrion. Functionally, acts as a mitochondrial iron-sulfur (Fe-S) cluster assembly factor that facilitates (Fe-S) cluster insertion into a subset of mitochondrial proteins. Probably acts together with NFU1. The protein is BolA-like protein 3 of Homo sapiens (Human).